The primary structure comprises 1401 residues: Condensin complex subunit 1 (1401 aa).

The interval 1–603 (MAPQMYEFHL…TVCKNKPNMS (603 aa)) is interactions with SMC2 and SMC4. Ser20 and Ser585 each carry phosphoserine. The span at 576–596 (STQEKNPRESTGNMVTGQTVC) shows a compositional bias: polar residues. 3 disordered regions span residues 576–611 (STQE…SRGN), 956–978 (REEQ…TTME), and 1303–1401 (LEIG…RHRS). Residues 956–971 (REEQEHKTKDPKEKNT) are compositionally biased toward basic and acidic residues. Positions 1308-1336 (AGSQRAPSAKKPSTGSRYQPLASTASDND) are enriched in polar residues. Ser1310, Ser1315, and Ser1330 each carry phosphoserine. Position 1331 is a phosphothreonine (Thr1331). Ser1333 carries the phosphoserine modification. Thr1339 bears the Phosphothreonine mark. The short motif at 1342 to 1362 (PRRTTRRHPNTQQRASKKKPK) is the Bipartite nuclear localization signal element. Residues 1345 to 1362 (TTRRHPNTQQRASKKKPK) are compositionally biased toward basic residues. Ser1366, Ser1367, Ser1370, Ser1371, and Ser1376 each carry phosphoserine. Residues 1369–1382 (ESSEEDLSAEMTED) show a composition bias toward acidic residues. A phosphothreonine; by CDK1 mark is found at Thr1384 and Thr1389. Ser1395 is subject to Phosphoserine.

The protein belongs to the CND1 (condensin subunit 1) family. In terms of assembly, component of the condensin complex, which contains the SMC2 and SMC4 heterodimer, and three non SMC subunits that probably regulate the complex: NCAPH/BRRN1, NCAPD2/CAPD2 and NCAPG. Interacts with histones H1 and H3. Post-translationally, phosphorylated by CDK1. Its phosphorylation, as well as that of NCAPH and NCAPG subunits, activates the condensin complex and is required for chromosome condensation.

It localises to the nucleus. The protein localises to the cytoplasm. It is found in the chromosome. In terms of biological role, regulatory subunit of the condensin complex, a complex required for conversion of interphase chromatin into mitotic-like condense chromosomes. The condensin complex probably introduces positive supercoils into relaxed DNA in the presence of type I topoisomerases and converts nicked DNA into positive knotted forms in the presence of type II topoisomerases. May target the condensin complex to DNA via its C-terminal domain. May promote the resolution of double-strand DNA catenanes (intertwines) between sister chromatids. Condensin-mediated compaction likely increases tension in catenated sister chromatids, providing directionality for type II topoisomerase-mediated strand exchanges toward chromatid decatenation. Required for decatenation of non-centromeric ultrafine DNA bridges during anaphase. Early in neurogenesis, may play an essential role to ensure accurate mitotic chromosome condensation in neuron stem cells, ultimately affecting neuron pool and cortex size. This chain is Condensin complex subunit 1, found in Homo sapiens (Human).